We begin with the raw amino-acid sequence, 65 residues long: Diapause-specific peptide (65 aa).

The first 24 residues, 1 to 24 (MGAALKMTIFLLIVACAMIATTEA), serve as a signal peptide directing secretion. 3 disulfides stabilise this stretch: cysteine 31-cysteine 45, cysteine 35-cysteine 57, and cysteine 46-cysteine 64.

In terms of tissue distribution, highly expressed in the fat body.

It is found in the secreted. In terms of biological role, has antifungal activity against T.rubrum. Blocks voltage-dependent N-type calcium channels (Cav2.2 / CACNA1B). The chain is Diapause-specific peptide from Gastrophysa atrocyanea (Leaf beetle).